Consider the following 784-residue polypeptide: PWWP domain-containing protein 2A (784 aa).

4 disordered regions span residues 1 to 32, 244 to 272, 463 to 567, and 605 to 654; these read MAAVAGAPGPGEGGESEQDSETIPGERRLGRL, KPVESIQEESKSFHEEPLVKSEENSPEDV, AKEK…EMQD, and SSSA…SSKE. The span at 244–266 shows a compositional bias: basic and acidic residues; that stretch reads KPVESIQEESKSFHEEPLVKSEE. Residues 536–556 show a composition bias toward polar residues; the sequence is TRYSATRSAGETPSEIQSPSN. A compositionally biased stretch (low complexity) spans 605–614; the sequence is SSSASVCSSD. A PWWP domain is found at 684–744; it reads VGDIVWAKIY…LSQLTPFLEN (61 aa).

It localises to the nucleus. In terms of biological role, H2A.Z-specific chromatin binding protein which plays an important role in the neural crest cell differentiation and/or migration during early development and is essential for the development of the head and eye. Acts as an adapter between distinct nucleosome components (H3K36me3 or H2A.Z) and chromatin-modifying complexes, contributing to the regulation of the levels of histone acetylation at actively transcribed genes. This chain is PWWP domain-containing protein 2A (pwwp2a), found in Xenopus tropicalis (Western clawed frog).